We begin with the raw amino-acid sequence, 430 residues long: Adenylosuccinate synthetase (430 aa).

GTP is bound by residues 13–19 (GDEGKGK) and 41–43 (GHT). Aspartate 14 (proton acceptor) is an active-site residue. Residues aspartate 14 and glycine 41 each contribute to the Mg(2+) site. IMP-binding positions include 14–17 (DEGK), 39–42 (NAGH), threonine 130, arginine 144, glutamine 225, threonine 240, and arginine 304. The Proton donor role is filled by histidine 42. 300-306 (ASTGRPR) is a binding site for substrate. GTP-binding positions include arginine 306, 332–334 (KLD), and 414–416 (STG).

Belongs to the adenylosuccinate synthetase family. Homodimer. Mg(2+) is required as a cofactor.

It is found in the cytoplasm. It carries out the reaction IMP + L-aspartate + GTP = N(6)-(1,2-dicarboxyethyl)-AMP + GDP + phosphate + 2 H(+). It participates in purine metabolism; AMP biosynthesis via de novo pathway; AMP from IMP: step 1/2. Its function is as follows. Plays an important role in the de novo pathway of purine nucleotide biosynthesis. Catalyzes the first committed step in the biosynthesis of AMP from IMP. The polypeptide is Adenylosuccinate synthetase (Xylella fastidiosa (strain M23)).